The sequence spans 148 residues: Endoribonuclease YbeY (148 aa).

Residues His-113, His-117, and His-123 each contribute to the Zn(2+) site.

Belongs to the endoribonuclease YbeY family. Zn(2+) is required as a cofactor.

The protein localises to the cytoplasm. Its function is as follows. Single strand-specific metallo-endoribonuclease involved in late-stage 70S ribosome quality control and in maturation of the 3' terminus of the 16S rRNA. This is Endoribonuclease YbeY from Borrelia hermsii (strain HS1 / DAH).